The following is a 135-amino-acid chain: Small ribosomal subunit protein uS12 (135 aa).

Residue D89 is modified to 3-methylthioaspartic acid. Residues 101 to 135 are disordered; it reads SLDTSGVADRKQSRSKYGAKQPKAGAAAPVKGKRR. Positions 116–135 are enriched in low complexity; sequence KYGAKQPKAGAAAPVKGKRR.

The protein belongs to the universal ribosomal protein uS12 family. As to quaternary structure, part of the 30S ribosomal subunit. Contacts proteins S8 and S17. May interact with IF1 in the 30S initiation complex.

Its function is as follows. With S4 and S5 plays an important role in translational accuracy. In terms of biological role, interacts with and stabilizes bases of the 16S rRNA that are involved in tRNA selection in the A site and with the mRNA backbone. Located at the interface of the 30S and 50S subunits, it traverses the body of the 30S subunit contacting proteins on the other side and probably holding the rRNA structure together. The combined cluster of proteins S8, S12 and S17 appears to hold together the shoulder and platform of the 30S subunit. In Chlorobium phaeobacteroides (strain DSM 266 / SMG 266 / 2430), this protein is Small ribosomal subunit protein uS12.